A 373-amino-acid polypeptide reads, in one-letter code: Flagellar P-ring protein (373 aa).

The N-terminal stretch at 1-26 (MKLFFRIVTLVAVVAMSLADMAPAWA) is a signal peptide.

Belongs to the FlgI family. In terms of assembly, the basal body constitutes a major portion of the flagellar organelle and consists of four rings (L,P,S, and M) mounted on a central rod.

Its subcellular location is the periplasm. The protein resides in the bacterial flagellum basal body. Its function is as follows. Assembles around the rod to form the L-ring and probably protects the motor/basal body from shearing forces during rotation. In Rhizobium etli (strain ATCC 51251 / DSM 11541 / JCM 21823 / NBRC 15573 / CFN 42), this protein is Flagellar P-ring protein.